Here is a 239-residue protein sequence, read N- to C-terminus: Ribosomal RNA large subunit methyltransferase E (239 aa).

Gly81, Trp83, Asp104, Asp120, and Asp144 together coordinate S-adenosyl-L-methionine. Catalysis depends on Lys184, which acts as the Proton acceptor.

This sequence belongs to the class I-like SAM-binding methyltransferase superfamily. RNA methyltransferase RlmE family.

The protein resides in the cytoplasm. The catalysed reaction is uridine(2552) in 23S rRNA + S-adenosyl-L-methionine = 2'-O-methyluridine(2552) in 23S rRNA + S-adenosyl-L-homocysteine + H(+). Functionally, specifically methylates the uridine in position 2552 of 23S rRNA at the 2'-O position of the ribose in the fully assembled 50S ribosomal subunit. This Rhizobium rhizogenes (strain K84 / ATCC BAA-868) (Agrobacterium radiobacter) protein is Ribosomal RNA large subunit methyltransferase E.